Consider the following 355-residue polypeptide: UDP-N-acetylglucosamine--N-acetylmuramyl-(pentapeptide) pyrophosphoryl-undecaprenol N-acetylglucosamine transferase (355 aa).

Residues 13–15 (TGG), Asn125, Arg162, Ser190, Ile244, and Gln289 contribute to the UDP-N-acetyl-alpha-D-glucosamine site.

This sequence belongs to the glycosyltransferase 28 family. MurG subfamily.

It is found in the cell inner membrane. It catalyses the reaction di-trans,octa-cis-undecaprenyl diphospho-N-acetyl-alpha-D-muramoyl-L-alanyl-D-glutamyl-meso-2,6-diaminopimeloyl-D-alanyl-D-alanine + UDP-N-acetyl-alpha-D-glucosamine = di-trans,octa-cis-undecaprenyl diphospho-[N-acetyl-alpha-D-glucosaminyl-(1-&gt;4)]-N-acetyl-alpha-D-muramoyl-L-alanyl-D-glutamyl-meso-2,6-diaminopimeloyl-D-alanyl-D-alanine + UDP + H(+). The protein operates within cell wall biogenesis; peptidoglycan biosynthesis. Functionally, cell wall formation. Catalyzes the transfer of a GlcNAc subunit on undecaprenyl-pyrophosphoryl-MurNAc-pentapeptide (lipid intermediate I) to form undecaprenyl-pyrophosphoryl-MurNAc-(pentapeptide)GlcNAc (lipid intermediate II). The polypeptide is UDP-N-acetylglucosamine--N-acetylmuramyl-(pentapeptide) pyrophosphoryl-undecaprenol N-acetylglucosamine transferase (Neisseria meningitidis serogroup A / serotype 4A (strain DSM 15465 / Z2491)).